The chain runs to 180 residues: Large ribosomal subunit protein uL6 (180 aa).

Belongs to the universal ribosomal protein uL6 family. In terms of assembly, part of the 50S ribosomal subunit.

In terms of biological role, this protein binds to the 23S rRNA, and is important in its secondary structure. It is located near the subunit interface in the base of the L7/L12 stalk, and near the tRNA binding site of the peptidyltransferase center. This chain is Large ribosomal subunit protein uL6, found in Picosynechococcus sp. (strain ATCC 27264 / PCC 7002 / PR-6) (Agmenellum quadruplicatum).